The sequence spans 349 residues: Single-stranded TG1-3 DNA-binding protein (349 aa).

Positions 45-127 (FRVFVGRLST…REIVVQKARP (83 aa)) constitute an RRM 1 domain. 2 disordered regions span residues 121-208 (VVQK…PNSI) and 298-349 (EDKQ…AITA). A Phosphoserine modification is found at S152. The span at 168–179 (ANTATAPSSNEA) shows a compositional bias: polar residues. Residues 181–191 (GVDKKQNEIKG) are compositionally biased toward basic and acidic residues. The RRM 2 domain maps to 206 to 296 (NSIYVSGLSV…LTLVVKSAVF (91 aa)). Composition is skewed to basic and acidic residues over residues 298-310 (EDKQ…KNEN) and 327-340 (TEPK…EEKS).

It is found in the cytoplasm. It localises to the nucleus. The protein localises to the chromosome. The protein resides in the telomere. Binds single-stranded telomeric sequences of the type (TG[1-3])n in vitro. Has a role in meiosis. This is Single-stranded TG1-3 DNA-binding protein (tcg1) from Schizosaccharomyces pombe (strain 972 / ATCC 24843) (Fission yeast).